A 363-amino-acid polypeptide reads, in one-letter code: Inositol-3-phosphate synthase (363 aa).

Positions 68, 127, 147, 190, 225, and 238 each coordinate NAD(+).

It belongs to the myo-inositol 1-phosphate synthase family. As to quaternary structure, monomer. Requires NAD(+) as cofactor.

The catalysed reaction is D-glucose 6-phosphate = 1D-myo-inositol 3-phosphate. The protein operates within polyol metabolism; myo-inositol biosynthesis; myo-inositol from D-glucose 6-phosphate: step 1/2. In terms of biological role, key enzyme in myo-inositol biosynthesis pathway that catalyzes the conversion of glucose 6-phosphate to 1D-myo-inositol 3-phosphate in a NAD-dependent manner. Plays a key role in oxidative stress resistance as its product is the precursor of the protective antioxidant mycothiol (MSH or AcCys-GlcN-Ins). This chain is Inositol-3-phosphate synthase, found in Corynebacterium glutamicum (strain ATCC 13032 / DSM 20300 / JCM 1318 / BCRC 11384 / CCUG 27702 / LMG 3730 / NBRC 12168 / NCIMB 10025 / NRRL B-2784 / 534).